The primary structure comprises 1176 residues: Translation initiation factor IF-2 (1176 aa).

4 stretches are compositionally biased toward low complexity: residues 32–44 (IAAK…ISDS), 57–79 (ASPS…AGKS), 94–166 (APVA…AAPS), and 193–235 (KPTP…VKPT). Disordered regions lie at residues 32 to 502 (IAAK…QRQK) and 535 to 567 (RPAK…RQRR). Residues 251–270 (APPPASTPRPAPSRPTPRPA) are compositionally biased toward pro residues. Composition is skewed to low complexity over residues 388–409 (GRPG…GGMR) and 439–469 (NRPT…FRPG). Residues 478–492 (GRPDWDDSAKLEALR) are compositionally biased toward basic and acidic residues. The segment covering 553 to 567 (VRKRRKETARQRQRR) has biased composition (basic residues). A tr-type G domain is found at 668-840 (RRPPVVTVMG…LLLVTEVEDL (173 aa)). Residues 677-684 (GHVDHGKT) form a G1 region. 677-684 (GHVDHGKT) is a GTP binding site. The tract at residues 702 to 706 (GITQH) is G2. Residues 727–730 (DTPG) are G3. GTP contacts are provided by residues 727–731 (DTPGH) and 781–784 (NKID). The interval 781 to 784 (NKID) is G4. The tract at residues 817-819 (SAI) is G5.

Belongs to the TRAFAC class translation factor GTPase superfamily. Classic translation factor GTPase family. IF-2 subfamily.

It is found in the cytoplasm. Functionally, one of the essential components for the initiation of protein synthesis. Protects formylmethionyl-tRNA from spontaneous hydrolysis and promotes its binding to the 30S ribosomal subunits. Also involved in the hydrolysis of GTP during the formation of the 70S ribosomal complex. This Synechococcus sp. (strain CC9902) protein is Translation initiation factor IF-2.